Consider the following 268-residue polypeptide: Kynurenine formamidase (268 aa).

Residues 33–37 carry the HGGXW motif; it reads HGGGW. The active-site Nucleophile is the S107. Residues D219 and H251 contribute to the active site.

This sequence belongs to the kynurenine formamidase family. Homodimer.

It carries out the reaction N-formyl-L-kynurenine + H2O = L-kynurenine + formate + H(+). It functions in the pathway amino-acid degradation; L-tryptophan degradation via kynurenine pathway; L-kynurenine from L-tryptophan: step 2/2. Catalyzes the hydrolysis of N-formyl-L-kynurenine to L-kynurenine, the second step in the kynurenine pathway of tryptophan degradation. Kynurenine may be further oxidized to nicotinic acid, NAD(H) and NADP(H). Required for elimination of toxic metabolites. The polypeptide is Kynurenine formamidase (Scheffersomyces stipitis (strain ATCC 58785 / CBS 6054 / NBRC 10063 / NRRL Y-11545) (Yeast)).